The chain runs to 251 residues: Ubiquinone/menaquinone biosynthesis C-methyltransferase UbiE (251 aa).

S-adenosyl-L-methionine contacts are provided by residues Thr74, Asp95, 123–124, and Ser140; that span reads NA.

It belongs to the class I-like SAM-binding methyltransferase superfamily. MenG/UbiE family.

It carries out the reaction a 2-demethylmenaquinol + S-adenosyl-L-methionine = a menaquinol + S-adenosyl-L-homocysteine + H(+). It catalyses the reaction a 2-methoxy-6-(all-trans-polyprenyl)benzene-1,4-diol + S-adenosyl-L-methionine = a 5-methoxy-2-methyl-3-(all-trans-polyprenyl)benzene-1,4-diol + S-adenosyl-L-homocysteine + H(+). The protein operates within quinol/quinone metabolism; menaquinone biosynthesis; menaquinol from 1,4-dihydroxy-2-naphthoate: step 2/2. It participates in cofactor biosynthesis; ubiquinone biosynthesis. Functionally, methyltransferase required for the conversion of demethylmenaquinol (DMKH2) to menaquinol (MKH2) and the conversion of 2-polyprenyl-6-methoxy-1,4-benzoquinol (DDMQH2) to 2-polyprenyl-3-methyl-6-methoxy-1,4-benzoquinol (DMQH2). The protein is Ubiquinone/menaquinone biosynthesis C-methyltransferase UbiE of Salmonella arizonae (strain ATCC BAA-731 / CDC346-86 / RSK2980).